A 431-amino-acid chain; its full sequence is Enolase (431 aa).

A (2R)-2-phosphoglycerate-binding site is contributed by Gln166. The active-site Proton donor is the Glu208. Mg(2+) contacts are provided by Asp245, Glu288, and Asp315. 4 residues coordinate (2R)-2-phosphoglycerate: Lys340, Arg369, Ser370, and Lys391. The active-site Proton acceptor is Lys340.

Belongs to the enolase family. The cofactor is Mg(2+).

Its subcellular location is the cytoplasm. The protein localises to the secreted. It is found in the cell surface. It catalyses the reaction (2R)-2-phosphoglycerate = phosphoenolpyruvate + H2O. It participates in carbohydrate degradation; glycolysis; pyruvate from D-glyceraldehyde 3-phosphate: step 4/5. Functionally, catalyzes the reversible conversion of 2-phosphoglycerate (2-PG) into phosphoenolpyruvate (PEP). It is essential for the degradation of carbohydrates via glycolysis. This Clostridium botulinum (strain ATCC 19397 / Type A) protein is Enolase.